A 183-amino-acid chain; its full sequence is Capsid protein (183 aa).

Residues 136–183 form a disordered region; sequence NAPILSTLPETTVVRRRGRSPRRRTPSPRRRRSQSPRRRRSQSRESQC. The segment covering 149–176 has biased composition (basic residues); it reads VRRRGRSPRRRTPSPRRRRSQSPRRRRS. Phosphoserine; by host is present on residues S155, S162, and S170. A 1; half-length repeat occupies 155 to 161; the sequence is SPRRRTP. The interval 155-177 is 3 X 8 AA repeats of S-P-R-R-R-[PR]-S-Q; the sequence is SPRRRTPSPRRRRSQSPRRRRSQ. The short motif at 158 to 175 is the Bipartite nuclear localization signal element; that stretch reads RRTPSPRRRRSQSPRRRR. A run of 2 repeats spans residues 162–169 and 170–177. Residues 177–183 are RNA binding; it reads QSRESQC.

Belongs to the orthohepadnavirus core antigen family. In terms of assembly, homodimerizes, then multimerizes. Interacts with cytosol exposed regions of viral L glycoprotein present in the reticulum-to-Golgi compartment. Interacts with human FLNB. Phosphorylated form interacts with host importin alpha; this interaction depends on the exposure of the NLS, which itself depends upon genome maturation and/or phosphorylation of the capsid protein. Interacts with host NUP153. In terms of processing, phosphorylated by host SRPK1, SRPK2, and maybe protein kinase C or GAPDH. Phosphorylation is critical for pregenomic RNA packaging. Protein kinase C phosphorylation is stimulated by HBx protein and may play a role in transport of the viral genome to the nucleus at the late step during the viral replication cycle.

Its subcellular location is the virion. It localises to the host cytoplasm. Its function is as follows. Self assembles to form an icosahedral capsid. Most capsids appear to be large particles with an icosahedral symmetry of T=4 and consist of 240 copies of capsid protein, though a fraction forms smaller T=3 particles consisting of 180 capsid proteins. Entering capsids are transported along microtubules to the nucleus. Phosphorylation of the capsid is thought to induce exposure of nuclear localization signal in the C-terminal portion of the capsid protein that allows binding to the nuclear pore complex via the importin (karyopherin-) alpha and beta. Capsids are imported in intact form through the nuclear pore into the nuclear basket, where it probably binds NUP153. Only capsids that contain the mature viral genome can release the viral DNA and capsid protein into the nucleoplasm. Immature capsids get stuck in the basket. Capsids encapsulate the pre-genomic RNA and the P protein. Pre-genomic RNA is reverse-transcribed into DNA while the capsid is still in the cytoplasm. The capsid can then either be directed to the nucleus, providing more genomes for transcription, or bud through the endoplasmic reticulum to provide new virions. The polypeptide is Capsid protein (Homo sapiens (Human)).